A 2430-amino-acid chain; its full sequence is DNA-directed RNA polymerase subunit beta'' (2430 aa).

The Zn(2+) site is built by Cys336, Cys455, Cys462, and Cys465.

This sequence belongs to the RNA polymerase beta' chain family. RpoC2 subfamily. In terms of assembly, in plastids the minimal PEP RNA polymerase catalytic core is composed of four subunits: alpha, beta, beta', and beta''. When a (nuclear-encoded) sigma factor is associated with the core the holoenzyme is formed, which can initiate transcription. It depends on Zn(2+) as a cofactor.

It is found in the plastid. It localises to the chloroplast. The enzyme catalyses RNA(n) + a ribonucleoside 5'-triphosphate = RNA(n+1) + diphosphate. Its function is as follows. DNA-dependent RNA polymerase catalyzes the transcription of DNA into RNA using the four ribonucleoside triphosphates as substrates. In Stigeoclonium helveticum (Green alga), this protein is DNA-directed RNA polymerase subunit beta''.